Reading from the N-terminus, the 233-residue chain is Leucyl/phenylalanyl-tRNA--protein transferase (233 aa).

This sequence belongs to the L/F-transferase family.

It localises to the cytoplasm. The enzyme catalyses N-terminal L-lysyl-[protein] + L-leucyl-tRNA(Leu) = N-terminal L-leucyl-L-lysyl-[protein] + tRNA(Leu) + H(+). It carries out the reaction N-terminal L-arginyl-[protein] + L-leucyl-tRNA(Leu) = N-terminal L-leucyl-L-arginyl-[protein] + tRNA(Leu) + H(+). It catalyses the reaction L-phenylalanyl-tRNA(Phe) + an N-terminal L-alpha-aminoacyl-[protein] = an N-terminal L-phenylalanyl-L-alpha-aminoacyl-[protein] + tRNA(Phe). Functions in the N-end rule pathway of protein degradation where it conjugates Leu, Phe and, less efficiently, Met from aminoacyl-tRNAs to the N-termini of proteins containing an N-terminal arginine or lysine. The sequence is that of Leucyl/phenylalanyl-tRNA--protein transferase from Anaeromyxobacter dehalogenans (strain 2CP-1 / ATCC BAA-258).